We begin with the raw amino-acid sequence, 427 residues long: Glutamate-1-semialdehyde 2,1-aminomutase (427 aa).

An N6-(pyridoxal phosphate)lysine modification is found at lysine 268.

It belongs to the class-III pyridoxal-phosphate-dependent aminotransferase family. HemL subfamily. The cofactor is pyridoxal 5'-phosphate.

The protein resides in the cytoplasm. It carries out the reaction (S)-4-amino-5-oxopentanoate = 5-aminolevulinate. Its pathway is porphyrin-containing compound metabolism; protoporphyrin-IX biosynthesis; 5-aminolevulinate from L-glutamyl-tRNA(Glu): step 2/2. In Methanococcus maripaludis (strain C6 / ATCC BAA-1332), this protein is Glutamate-1-semialdehyde 2,1-aminomutase.